Reading from the N-terminus, the 525-residue chain is GMP synthase [glutamine-hydrolyzing] (525 aa).

The Glutamine amidotransferase type-1 domain maps to 9–202; the sequence is SILIIDFGSQ…VHKIVGLKSD (194 aa). Residue Cys86 is the Nucleophile of the active site. Residues His176 and Glu178 contribute to the active site. Residues 203 to 400 enclose the GMPS ATP-PPase domain; sequence WTMAAYRAEM…LGLPESFIGR (198 aa). 230–236 serves as a coordination point for ATP; the sequence is SGGVDSS.

In terms of assembly, homodimer.

The enzyme catalyses XMP + L-glutamine + ATP + H2O = GMP + L-glutamate + AMP + diphosphate + 2 H(+). Its pathway is purine metabolism; GMP biosynthesis; GMP from XMP (L-Gln route): step 1/1. Catalyzes the synthesis of GMP from XMP. The polypeptide is GMP synthase [glutamine-hydrolyzing] (Agrobacterium fabrum (strain C58 / ATCC 33970) (Agrobacterium tumefaciens (strain C58))).